A 285-amino-acid chain; its full sequence is Hsp90 co-chaperone Cdc37-like 1 (285 aa).

The disordered stretch occupies residues 34-54 (LHNSESMDQEQAMAQAELSEL). Positions 35–73 (HNSESMDQEQAMAQAELSELQRSEEEWRRKEAALSQGEN) form a coiled coil.

This sequence belongs to the CDC37 family. As to quaternary structure, forms complexes with Hsp70 and Hsp90.

The protein resides in the cytoplasm. Co-chaperone that binds to numerous proteins and promotes their interaction with Hsp70 and Hsp90. This chain is Hsp90 co-chaperone Cdc37-like 1 (cdc37l1), found in Xenopus tropicalis (Western clawed frog).